Here is a 198-residue protein sequence, read N- to C-terminus: Recombination protein RecR (198 aa).

The C4-type zinc finger occupies 58–73 (CLNCGNVGTSDICDIC). The 95-residue stretch at 81–175 (GELCVVEDVA…RLTSLAQGVP (95 aa)) folds into the Toprim domain.

It belongs to the RecR family.

In terms of biological role, may play a role in DNA repair. It seems to be involved in an RecBC-independent recombinational process of DNA repair. It may act with RecF and RecO. This is Recombination protein RecR from Ruegeria pomeroyi (strain ATCC 700808 / DSM 15171 / DSS-3) (Silicibacter pomeroyi).